A 348-amino-acid chain; its full sequence is Holliday junction branch migration complex subunit RuvB (348 aa).

Positions methionine 1–tyrosine 182 are large ATPase domain (RuvB-L). Residues isoleucine 21, arginine 22, glycine 63, lysine 66, threonine 67, threonine 68, glutamate 129 to phenylalanine 131, arginine 172, tyrosine 182, and arginine 219 each bind ATP. Threonine 67 contacts Mg(2+). The segment at serine 183–glutamate 253 is small ATPAse domain (RuvB-S). The interval glutamate 256–glutamine 348 is head domain (RuvB-H). Positions 311 and 316 each coordinate DNA.

The protein belongs to the RuvB family. As to quaternary structure, homohexamer. Forms an RuvA(8)-RuvB(12)-Holliday junction (HJ) complex. HJ DNA is sandwiched between 2 RuvA tetramers; dsDNA enters through RuvA and exits via RuvB. An RuvB hexamer assembles on each DNA strand where it exits the tetramer. Each RuvB hexamer is contacted by two RuvA subunits (via domain III) on 2 adjacent RuvB subunits; this complex drives branch migration. In the full resolvosome a probable DNA-RuvA(4)-RuvB(12)-RuvC(2) complex forms which resolves the HJ.

The protein localises to the cytoplasm. It catalyses the reaction ATP + H2O = ADP + phosphate + H(+). The RuvA-RuvB-RuvC complex processes Holliday junction (HJ) DNA during genetic recombination and DNA repair, while the RuvA-RuvB complex plays an important role in the rescue of blocked DNA replication forks via replication fork reversal (RFR). RuvA specifically binds to HJ cruciform DNA, conferring on it an open structure. The RuvB hexamer acts as an ATP-dependent pump, pulling dsDNA into and through the RuvAB complex. RuvB forms 2 homohexamers on either side of HJ DNA bound by 1 or 2 RuvA tetramers; 4 subunits per hexamer contact DNA at a time. Coordinated motions by a converter formed by DNA-disengaged RuvB subunits stimulates ATP hydrolysis and nucleotide exchange. Immobilization of the converter enables RuvB to convert the ATP-contained energy into a lever motion, pulling 2 nucleotides of DNA out of the RuvA tetramer per ATP hydrolyzed, thus driving DNA branch migration. The RuvB motors rotate together with the DNA substrate, which together with the progressing nucleotide cycle form the mechanistic basis for DNA recombination by continuous HJ branch migration. Branch migration allows RuvC to scan DNA until it finds its consensus sequence, where it cleaves and resolves cruciform DNA. The protein is Holliday junction branch migration complex subunit RuvB of Chlorobium limicola (strain DSM 245 / NBRC 103803 / 6330).